Here is a 164-residue protein sequence, read N- to C-terminus: Putative L,D-transpeptidase YkuD (164 aa).

A LysM domain is found at 2 to 45; that stretch reads LTYQVKQGDTLNSIAADFRISTAALLQANPSLQAGLTAGQSIVI. The L,D-TPase catalytic domain occupies 56-163; it reads YHIAVSIGAK…VPNGTRVTIN (108 aa). H123 serves as the catalytic Proton donor/acceptor. C139 functions as the Nucleophile in the catalytic mechanism.

It belongs to the YkuD family. Monomer.

Its subcellular location is the spore wall. It participates in cell wall biogenesis; peptidoglycan biosynthesis. Its function is as follows. Probable enzyme that may play an important role in cell wall biology. The polypeptide is Putative L,D-transpeptidase YkuD (ykuD) (Bacillus subtilis (strain 168)).